Reading from the N-terminus, the 338-residue chain is DNA-directed RNA polymerase subunit alpha (338 aa).

The segment at 1–234 (MIQKNWQELT…DQLNVFVNFE (234 aa)) is alpha N-terminal domain (alpha-NTD). The segment at 250–338 (FNPALLKKVD…DLAKRFEEHY (89 aa)) is alpha C-terminal domain (alpha-CTD).

The protein belongs to the RNA polymerase alpha chain family. Homodimer. The RNAP catalytic core consists of 2 alpha, 1 beta, 1 beta' and 1 omega subunit. When a sigma factor is associated with the core the holoenzyme is formed, which can initiate transcription.

The catalysed reaction is RNA(n) + a ribonucleoside 5'-triphosphate = RNA(n+1) + diphosphate. Its function is as follows. DNA-dependent RNA polymerase catalyzes the transcription of DNA into RNA using the four ribonucleoside triphosphates as substrates. This chain is DNA-directed RNA polymerase subunit alpha, found in Methylocella silvestris (strain DSM 15510 / CIP 108128 / LMG 27833 / NCIMB 13906 / BL2).